We begin with the raw amino-acid sequence, 388 residues long: MNLHEYQAKQIFAQYRLPVSKGIVCHSLDDAVSAIHTLAGDTWAAKCQVHAGGRGKAGGVKLVRSEAEIREFCNQWLGQRLVTFQTDKNGQPVNTIYLEETCLIERELYLGAVIDRSSQKIVFMASNAGGMNIEDVAAQTPELIHKATIDPLTGAQAFQGRELAFKLGLSGDQIKQFAHLFVQLAKLFIEKDLALLEVNPLVLTKQGQLLCLDAKMVIDSNALYRHPELKALQDPSQEDAREADAAKWDLNYVALDGNIGCMVNGAGLAMGTMDIVKLHGGRPANFLDVGGGATKERVSEAFKLILSDQNVKAVLVNIFGGIVRCDLIAEGIIAAVNEVGINIPVIVRLEGTNAELGREILANSSLRLIAANTLTQAAQLAVKAAEGK.

Residues Lys46, 53-55 (GRG), Glu99, Cys102, and Glu107 each bind ATP. Asn199 and Asp213 together coordinate Mg(2+). Residues Asn264 and 321-323 (GIV) contribute to the substrate site.

Belongs to the succinate/malate CoA ligase beta subunit family. As to quaternary structure, heterotetramer of two alpha and two beta subunits. Mg(2+) is required as a cofactor.

The enzyme catalyses succinate + ATP + CoA = succinyl-CoA + ADP + phosphate. It catalyses the reaction GTP + succinate + CoA = succinyl-CoA + GDP + phosphate. It participates in carbohydrate metabolism; tricarboxylic acid cycle; succinate from succinyl-CoA (ligase route): step 1/1. Succinyl-CoA synthetase functions in the citric acid cycle (TCA), coupling the hydrolysis of succinyl-CoA to the synthesis of either ATP or GTP and thus represents the only step of substrate-level phosphorylation in the TCA. The beta subunit provides nucleotide specificity of the enzyme and binds the substrate succinate, while the binding sites for coenzyme A and phosphate are found in the alpha subunit. This Actinobacillus pleuropneumoniae serotype 7 (strain AP76) protein is Succinate--CoA ligase [ADP-forming] subunit beta.